Here is a 455-residue protein sequence, read N- to C-terminus: tRNA-2-methylthio-N(6)-dimethylallyladenosine synthase (455 aa).

Residues 18–133 (KKLFIETYGC…LPELIAAVEA (116 aa)) enclose the MTTase N-terminal domain. Residues cysteine 27, cysteine 63, cysteine 97, cysteine 171, cysteine 175, and cysteine 178 each coordinate [4Fe-4S] cluster. In terms of domain architecture, Radical SAM core spans 157–390 (CGNHISGFVS…IALQNRLSAE (234 aa)). The 63-residue stretch at 393–455 (QRCIGKTYEV…SSATLKGEEV (63 aa)) folds into the TRAM domain.

It belongs to the methylthiotransferase family. MiaB subfamily. As to quaternary structure, monomer. Requires [4Fe-4S] cluster as cofactor.

Its subcellular location is the cytoplasm. It catalyses the reaction N(6)-dimethylallyladenosine(37) in tRNA + (sulfur carrier)-SH + AH2 + 2 S-adenosyl-L-methionine = 2-methylsulfanyl-N(6)-dimethylallyladenosine(37) in tRNA + (sulfur carrier)-H + 5'-deoxyadenosine + L-methionine + A + S-adenosyl-L-homocysteine + 2 H(+). Its function is as follows. Catalyzes the methylthiolation of N6-(dimethylallyl)adenosine (i(6)A), leading to the formation of 2-methylthio-N6-(dimethylallyl)adenosine (ms(2)i(6)A) at position 37 in tRNAs that read codons beginning with uridine. The protein is tRNA-2-methylthio-N(6)-dimethylallyladenosine synthase of Bacteroides thetaiotaomicron (strain ATCC 29148 / DSM 2079 / JCM 5827 / CCUG 10774 / NCTC 10582 / VPI-5482 / E50).